The sequence spans 239 residues: Large ribosomal subunit protein uL1 (239 aa).

It belongs to the universal ribosomal protein uL1 family. In terms of assembly, part of the 50S ribosomal subunit.

Functionally, binds directly to 23S rRNA. The L1 stalk is quite mobile in the ribosome, and is involved in E site tRNA release. Its function is as follows. Protein L1 is also a translational repressor protein, it controls the translation of the L11 operon by binding to its mRNA. This Rickettsia rickettsii (strain Iowa) protein is Large ribosomal subunit protein uL1.